The sequence spans 231 residues: Transmembrane gamma-carboxyglutamic acid protein 3 (231 aa).

A propeptide spanning residues 1 to 19 (MAVFLEAKDAHSVLKRFPR) is cleaved from the precursor. The Gla domain maps to 20–65 (ANEFLEELRQGTIERECMEEICSYEEVKEVFENKEKTMEFWKGYPN). The Extracellular segment spans residues 20 to 78 (ANEFLEELRQGTIERECMEEICSYEEVKEVFENKEKTMEFWKGYPNAVYSVRDPSQSSD). A 4-carboxyglutamate mark is found at glutamate 22, glutamate 25, glutamate 26, glutamate 33, glutamate 35, glutamate 38, glutamate 39, glutamate 44, glutamate 45, glutamate 48, glutamate 51, glutamate 54, and glutamate 58. A disulfide bond links cysteine 36 and cysteine 41. A helical membrane pass occupies residues 79–101 (AMYVVVPLLGVALLIVIALFIIW). The Cytoplasmic segment spans residues 102-231 (RCQLQKATRH…IVAANPGADK (130 aa)). Disordered stretches follow at residues 140 to 165 (HSQG…SRGG) and 182 to 231 (LSRL…GADK). Low complexity predominate over residues 202 to 213 (ESSSEEASVSYS).

In terms of processing, gla residues are produced after subsequent post-translational modifications of glutamate by a vitamin K-dependent gamma-carboxylase. In terms of tissue distribution, expressed in brain, lung, kidney and heart.

The protein localises to the membrane. The sequence is that of Transmembrane gamma-carboxyglutamic acid protein 3 (PRRG3) from Homo sapiens (Human).